A 429-amino-acid polypeptide reads, in one-letter code: Transcriptional adapter 3 (429 aa).

Residues 41–70 adopt a coiled-coil conformation; sequence IEELDTLQLELETLLSSASRRLRALEEQRQ. 3 disordered regions span residues 86 to 132, 208 to 257, and 274 to 308; these read KLEK…TKVQ, EERR…PFGP, and PMED…HTRS. Composition is skewed to basic and acidic residues over residues 208–221 and 230–249; these read EERR…DKKK and LDAK…HEPP. Positions 364–404 form a coiled coil; the sequence is LLKLAREEMRKQELRQRVRVADNEVMEAFRRIMAARQKKRT.

It belongs to the NGG1 family.

It is found in the nucleus. Functionally, functions as a component of the PCAF complex. The PCAF complex is capable of efficiently acetylating histones in a nucleosomal context. This is Transcriptional adapter 3 (tada3) from Danio rerio (Zebrafish).